Consider the following 253-residue polypeptide: Solute carrier family 66 member 2 (253 aa).

The next 6 membrane-spanning stretches (helical) occupy residues 7-27 (GWLL…AMVF), 49-69 (FSTY…LFWF), 72-92 (HFES…LLML), 125-145 (FADY…ITYL), 150-170 (ALFV…LGVP), and 214-234 (VCGL…YVFT). One can recognise a PQ-loop 1 domain in the interval 14–80 (HQLVSWGAAG…RHFESPLLWQ (67 aa)). The 56-residue stretch at 160–215 (AVLTEAMLGVPQLYRNHRHQSTEGMSIKMVLMWTSGDTFKTAYFLLNGAPLQFSVC) folds into the PQ-loop 2 domain.

The protein resides in the membrane. The chain is Solute carrier family 66 member 2 (SLC66A2) from Bos taurus (Bovine).